The following is a 722-amino-acid chain: Zinc finger protein 219 (722 aa).

A disordered region spans residues 1–21 (MEGSRPRAPSGHLAPSPPAFD). S16 is subject to Phosphoserine. C2H2-type zinc fingers lie at residues 57–79 (FPCPVCGKRFRFNSILALHLRAH) and 85–107 (FQCPHCGHRAAQRALLRSHLRTH). A disordered region spans residues 137-160 (ARSSGGMQATPATEGLARPQAPSS). C2H2-type zinc fingers lie at residues 163-186 (FRCPYCKGKFRTSAERERHLHILH) and 189-212 (WKCGLCSFGSSQEEELLHHSLTAH). Residues 215 to 275 (PERPLAATSA…EEPPAPPEFR (61 aa)) form a disordered region. 2 stretches are compositionally biased toward pro residues: residues 225-247 (APPPQPQPQPPPQPEPRSVPQPE) and 259-272 (TPAPAAPEEPPAPP). 2 consecutive C2H2-type zinc fingers follow at residues 274 to 296 (FRCQVCGQSFTQSWFLKGHMRKH) and 302 to 324 (HACPVCGRCFKEPWFLKNHMKVH). Residues 384 to 495 (LRAGEGRPNG…GTRPEGGRGA (112 aa)) form a disordered region. Residues 390-404 (RPNGEGAEPGPGRSF) are compositionally biased toward gly residues. Residues 425–438 (EPEEEEEVVEAEEE) show a composition bias toward acidic residues. A compositionally biased stretch (low complexity) spans 463–477 (SASAAGAQARSTATQ). 2 consecutive C2H2-type zinc fingers follow at residues 498–520 (KDCPFCGKSFRSAHHLKVHLRVH) and 526–548 (YKCPHCDYAGTQSGSLKYHLQRH). Disordered regions lie at residues 542–648 (KYHL…LHRC) and 668–722 (HHSR…GQER). Positions 558–568 (PGPPPEPPPPS) are enriched in pro residues. The span at 634 to 643 (GPGGEAGPGG) shows a compositional bias: gly residues. The C2H2-type 9 zinc finger occupies 646–668 (HRCLFCPFATGAPELMALHLQVH). A compositionally biased stretch (basic residues) spans 668 to 677 (HHSRRARGRR). Phosphoserine is present on S692. The residue at position 695 (T695) is a Phosphothreonine. Residue S698 is modified to Phosphoserine.

It belongs to the krueppel C2H2-type zinc-finger protein family. In terms of assembly, interacts with SOX9 (via C-terminus). Ubiquitous.

It is found in the nucleus. Transcriptional regulator. Recognizes and binds 2 copies of the core DNA sequence motif 5'-GGGGG-3'. Binds to the HMGN1 promoter and may repress HMGN1 expression. Regulates SNCA expression in primary cortical neurons. Binds to the COL2A1 promoter and activates COL2A1 expression, as part of a complex with SOX9. Plays a role in chondrocyte differentiation. The polypeptide is Zinc finger protein 219 (ZNF219) (Homo sapiens (Human)).